The chain runs to 287 residues: uncharacterized protein (287 aa).

2 consecutive transmembrane segments (helical) span residues 12-32 (IILLFGMLVFLVLLGLGGAAL) and 217-237 (YTIGAITLVSVSGGVLAVLIV).

It is found in the cell membrane. This is an uncharacterized protein from Mycoplasma pneumoniae (strain ATCC 29342 / M129 / Subtype 1) (Mycoplasmoides pneumoniae).